The sequence spans 194 residues: Orotate phosphoribosyltransferase (194 aa).

Residues Arg-102, Lys-103, Lys-106, His-108, and 129–137 contribute to the 5-phospho-alpha-D-ribose 1-diphosphate site; that span reads EDVVTTGGS. The orotate site is built by Thr-133 and Arg-161.

The protein belongs to the purine/pyrimidine phosphoribosyltransferase family. PyrE subfamily. Homodimer. The cofactor is Mg(2+).

The enzyme catalyses orotidine 5'-phosphate + diphosphate = orotate + 5-phospho-alpha-D-ribose 1-diphosphate. The protein operates within pyrimidine metabolism; UMP biosynthesis via de novo pathway; UMP from orotate: step 1/2. Functionally, catalyzes the transfer of a ribosyl phosphate group from 5-phosphoribose 1-diphosphate to orotate, leading to the formation of orotidine monophosphate (OMP). The sequence is that of Orotate phosphoribosyltransferase from Prochlorococcus marinus (strain MIT 9211).